The chain runs to 586 residues: Adenine deaminase (586 aa).

This sequence belongs to the metallo-dependent hydrolases superfamily. Adenine deaminase family. Requires Mn(2+) as cofactor.

It catalyses the reaction adenine + H2O + H(+) = hypoxanthine + NH4(+). This is Adenine deaminase from Bdellovibrio bacteriovorus (strain ATCC 15356 / DSM 50701 / NCIMB 9529 / HD100).